Reading from the N-terminus, the 474-residue chain is Solute carrier family 49 member A3 (474 aa).

The disordered stretch occupies residues 1 to 20; it reads MEGESAETEPLIQSSSAADR. 12 helical membrane-spanning segments follow: residues 38 to 58, 69 to 89, 105 to 126, 134 to 154, 175 to 195, 201 to 221, 258 to 278, 290 to 310, 326 to 346, 349 to 369, 388 to 408, and 428 to 448; these read WFIL…WLTF, LCVS…AAVV, CSLI…CGVL, VFAV…LVIF, LASM…PLIV, LFLL…LATL, WILL…STLL, GFAG…AFLL, ICMC…QLPA, VLLV…YPVG, LIFT…QALA, and VPVL…VVFF.

Belongs to the major facilitator superfamily.

The protein localises to the membrane. The sequence is that of Solute carrier family 49 member A3 (slc49a3) from Danio rerio (Zebrafish).